A 368-amino-acid chain; its full sequence is Phosphoserine aminotransferase (368 aa).

Arginine 42 is an L-glutamate binding site. Pyridoxal 5'-phosphate-binding residues include tryptophan 101, threonine 151, aspartate 175, and glutamine 198. At lysine 199 the chain carries N6-(pyridoxal phosphate)lysine. 240–241 (NT) is a binding site for pyridoxal 5'-phosphate.

Belongs to the class-V pyridoxal-phosphate-dependent aminotransferase family. SerC subfamily. Homodimer. Pyridoxal 5'-phosphate serves as cofactor.

The protein localises to the cytoplasm. The enzyme catalyses O-phospho-L-serine + 2-oxoglutarate = 3-phosphooxypyruvate + L-glutamate. It catalyses the reaction 4-(phosphooxy)-L-threonine + 2-oxoglutarate = (R)-3-hydroxy-2-oxo-4-phosphooxybutanoate + L-glutamate. The protein operates within amino-acid biosynthesis; L-serine biosynthesis; L-serine from 3-phospho-D-glycerate: step 2/3. It functions in the pathway cofactor biosynthesis; pyridoxine 5'-phosphate biosynthesis; pyridoxine 5'-phosphate from D-erythrose 4-phosphate: step 3/5. Functionally, catalyzes the reversible conversion of 3-phosphohydroxypyruvate to phosphoserine and of 3-hydroxy-2-oxo-4-phosphonooxybutanoate to phosphohydroxythreonine. This Polaromonas sp. (strain JS666 / ATCC BAA-500) protein is Phosphoserine aminotransferase.